Reading from the N-terminus, the 448-residue chain is tRNA-2-methylthio-N(6)-dimethylallyladenosine synthase (448 aa).

In terms of domain architecture, MTTase N-terminal spans 2–120; that stretch reads KKYRIIVFGC…LPELIGKVIE (119 aa). Positions 11, 47, 81, 158, 162, and 165 each coordinate [4Fe-4S] cluster. One can recognise a Radical SAM core domain in the interval 144-374; the sequence is RKEGVRAWVT…IKLQNKISLE (231 aa). One can recognise a TRAM domain in the interval 377–440; sequence EEEVGQTQEV…LAHLTGILSY (64 aa).

This sequence belongs to the methylthiotransferase family. MiaB subfamily. Monomer. The cofactor is [4Fe-4S] cluster.

It localises to the cytoplasm. It carries out the reaction N(6)-dimethylallyladenosine(37) in tRNA + (sulfur carrier)-SH + AH2 + 2 S-adenosyl-L-methionine = 2-methylsulfanyl-N(6)-dimethylallyladenosine(37) in tRNA + (sulfur carrier)-H + 5'-deoxyadenosine + L-methionine + A + S-adenosyl-L-homocysteine + 2 H(+). In terms of biological role, catalyzes the methylthiolation of N6-(dimethylallyl)adenosine (i(6)A), leading to the formation of 2-methylthio-N6-(dimethylallyl)adenosine (ms(2)i(6)A) at position 37 in tRNAs that read codons beginning with uridine. This Pelotomaculum thermopropionicum (strain DSM 13744 / JCM 10971 / SI) protein is tRNA-2-methylthio-N(6)-dimethylallyladenosine synthase.